Reading from the N-terminus, the 90-residue chain is MANSPSAKKRAKQAEKRRSHNASLRSMVRTYIKNVVKAIDAKDAEKAQAAYVLAVPVIDRMADKGIIHKNKAARHKSRLNGHVKALKAAA.

The tract at residues 1 to 25 (MANSPSAKKRAKQAEKRRSHNASLR) is disordered. Residues 7–20 (AKKRAKQAEKRRSH) show a composition bias toward basic residues.

The protein belongs to the bacterial ribosomal protein bS20 family.

In terms of biological role, binds directly to 16S ribosomal RNA. The protein is Small ribosomal subunit protein bS20 of Pseudomonas fluorescens (strain Pf0-1).